The primary structure comprises 257 residues: Thiazole synthase (257 aa).

K95 (schiff-base intermediate with DXP) is an active-site residue. Residues G156, A182 to G183, and N204 to T205 each bind 1-deoxy-D-xylulose 5-phosphate.

It belongs to the ThiG family. In terms of assembly, homotetramer. Forms heterodimers with either ThiH or ThiS.

The protein resides in the cytoplasm. It carries out the reaction [ThiS sulfur-carrier protein]-C-terminal-Gly-aminoethanethioate + 2-iminoacetate + 1-deoxy-D-xylulose 5-phosphate = [ThiS sulfur-carrier protein]-C-terminal Gly-Gly + 2-[(2R,5Z)-2-carboxy-4-methylthiazol-5(2H)-ylidene]ethyl phosphate + 2 H2O + H(+). It participates in cofactor biosynthesis; thiamine diphosphate biosynthesis. Its function is as follows. Catalyzes the rearrangement of 1-deoxy-D-xylulose 5-phosphate (DXP) to produce the thiazole phosphate moiety of thiamine. Sulfur is provided by the thiocarboxylate moiety of the carrier protein ThiS. In vitro, sulfur can be provided by H(2)S. The sequence is that of Thiazole synthase from Fusobacterium nucleatum subsp. nucleatum (strain ATCC 25586 / DSM 15643 / BCRC 10681 / CIP 101130 / JCM 8532 / KCTC 2640 / LMG 13131 / VPI 4355).